Consider the following 310-residue polypeptide: NADH-cytochrome b5 reductase 1 (310 aa).

Residues 32 to 52 (EWLPYAVALAAILSGGKVFSN) form a helical membrane-spanning segment. In terms of domain architecture, FAD-binding FR-type spans 61–166 (TEFQNFELKE…RGPKGAMVYT (106 aa)). FAD contacts are provided by residues 146–161 (AGLRIGQTMKVRGPKG) and 172–209 (KIGMIAGGTGITPMLQIIKAIIRGRPRNGGNDTTQVDL).

It belongs to the flavoprotein pyridine nucleotide cytochrome reductase family. As to quaternary structure, monomer. Component of the 2-(3-amino-3-carboxypropyl)histidine synthase complex composed of DPH1, DPH2, DPH3 and a NADH-dependent reductase, predominantly CBR1. Requires FAD as cofactor.

The protein localises to the mitochondrion outer membrane. The catalysed reaction is 2 Fe(III)-[cytochrome b5] + NADH = 2 Fe(II)-[cytochrome b5] + NAD(+) + H(+). It carries out the reaction 2 Fe(3+)-[Dph3] + NADH = 2 Fe(2+)-[Dph3] + NAD(+) + H(+). The protein operates within protein modification; peptidyl-diphthamide biosynthesis. Its function is as follows. NADH-dependent reductase for DPH3 and cytochrome b5. Required for the first step of diphthamide biosynthesis, a post-translational modification of histidine which occurs in elongation factor 2. DPH1 and DPH2 transfer a 3-amino-3-carboxypropyl (ACP) group from S-adenosyl-L-methionine (SAM) to a histidine residue, the reaction is assisted by a reduction system comprising DPH3 and a NADH-dependent reductase, predominantly CBR1. By reducing DPH3, also involved in the formation of the tRNA wobble base modification mcm5s 2U (5-methoxycarbonylmethyl-2-thiouridine), mediated by the elongator complex. The cytochrome b5/NADH cytochrome b5 reductase electron transfer system supports the catalytic activity of several sterol biosynthetic enzymes. This chain is NADH-cytochrome b5 reductase 1 (CBR1), found in Ajellomyces capsulatus (strain NAm1 / WU24) (Darling's disease fungus).